The following is a 424-amino-acid chain: CUGBP Elav-like family member 4 (424 aa).

Residues Val8–Asn27 are disordered. A compositionally biased stretch (polar residues) spans Ala9 to Gly24. 2 RRM domains span residues Ile47–Ser128 and Pro342–Pro417.

It belongs to the CELF/BRUNOL family.

The protein localises to the nucleus. The protein resides in the cytoplasm. Functionally, RNA-binding protein that may be implicated in the regulation of pre-mRNA alternative splicing. This Xenopus tropicalis (Western clawed frog) protein is CUGBP Elav-like family member 4 (celf4).